Reading from the N-terminus, the 116-residue chain is Large ribosomal subunit protein bL17 (116 aa).

Belongs to the bacterial ribosomal protein bL17 family. In terms of assembly, part of the 50S ribosomal subunit. Contacts protein L32.

The polypeptide is Large ribosomal subunit protein bL17 (Crocosphaera subtropica (strain ATCC 51142 / BH68) (Cyanothece sp. (strain ATCC 51142))).